The chain runs to 308 residues: GTPase Era (308 aa).

The Era-type G domain maps to Arg-9–Glu-179. Residues Gly-17–Ser-24 are G1. Position 17 to 24 (Gly-17 to Ser-24) interacts with GTP. The tract at residues Gln-43–Ala-47 is G2. The interval Asp-64 to Gly-67 is G3. GTP is bound by residues Asp-64–Leu-68 and Asn-129–Asp-132. Residues Asn-129 to Asp-132 form a G4 region. The interval Ile-158–Ala-160 is G5. A KH type-2 domain is found at Leu-210–Pro-287.

Belongs to the TRAFAC class TrmE-Era-EngA-EngB-Septin-like GTPase superfamily. Era GTPase family. As to quaternary structure, monomer.

The protein resides in the cytoplasm. Its subcellular location is the cell inner membrane. Its function is as follows. An essential GTPase that binds both GDP and GTP, with rapid nucleotide exchange. Plays a role in 16S rRNA processing and 30S ribosomal subunit biogenesis and possibly also in cell cycle regulation and energy metabolism. This chain is GTPase Era, found in Dinoroseobacter shibae (strain DSM 16493 / NCIMB 14021 / DFL 12).